Consider the following 464-residue polypeptide: Cytoplasmic tRNA 2-thiolation protein 2 (464 aa).

Belongs to the CTU2/NCS2 family.

It localises to the cytoplasm. Its pathway is tRNA modification; 5-methoxycarbonylmethyl-2-thiouridine-tRNA biosynthesis. Its function is as follows. Plays a central role in 2-thiolation of mcm(5)S(2)U at tRNA wobble positions of tRNA(Lys), tRNA(Glu) and tRNA(Gln). May act by forming a heterodimer with NCS6/CTU1 that ligates sulfur from thiocarboxylated URM1 onto the uridine of tRNAs at wobble position. This Oryza sativa subsp. japonica (Rice) protein is Cytoplasmic tRNA 2-thiolation protein 2.